The chain runs to 486 residues: Phosphomethylpyrimidine synthase (486 aa).

Substrate contacts are provided by residues asparagine 80, methionine 109, tyrosine 139, histidine 175, serine 195–glycine 197, aspartate 236–arginine 239, and glutamate 275. Histidine 279 lines the Zn(2+) pocket. Tyrosine 329 lines the substrate pocket. Histidine 370 is a binding site for Zn(2+). Positions 450, 453, and 458 each coordinate [4Fe-4S] cluster.

The protein belongs to the ThiC family. [4Fe-4S] cluster is required as a cofactor.

It carries out the reaction 5-amino-1-(5-phospho-beta-D-ribosyl)imidazole + S-adenosyl-L-methionine = 4-amino-2-methyl-5-(phosphooxymethyl)pyrimidine + CO + 5'-deoxyadenosine + formate + L-methionine + 3 H(+). It participates in cofactor biosynthesis; thiamine diphosphate biosynthesis. Catalyzes the synthesis of the hydroxymethylpyrimidine phosphate (HMP-P) moiety of thiamine from aminoimidazole ribotide (AIR) in a radical S-adenosyl-L-methionine (SAM)-dependent reaction. In Trichodesmium erythraeum (strain IMS101), this protein is Phosphomethylpyrimidine synthase.